Reading from the N-terminus, the 259-residue chain is L-erythrulose-1-phosphate isomerase (259 aa).

H102 (electrophile) is an active-site residue. E174 (proton acceptor) is an active-site residue.

It belongs to the triosephosphate isomerase family.

It catalyses the reaction L-erythrulose 1-phosphate = D-erythrulose 4-phosphate. It functions in the pathway carbohydrate metabolism. Its function is as follows. Involved in catabolism of D-apiose. Catalyzes the isomerization of L-erythrulose 1-phosphate to D-erythrulose 4-phosphate. The polypeptide is L-erythrulose-1-phosphate isomerase (Pectobacterium atrosepticum (strain SCRI 1043 / ATCC BAA-672) (Erwinia carotovora subsp. atroseptica)).